We begin with the raw amino-acid sequence, 362 residues long: Transcriptional repressor PifC (362 aa).

In terms of biological role, transcription repression of its own gene by binding to the PIF operator (pifO) and replication initiation from the primary origin (ori-1). Transcriptional repressor of the pifA and pifB. This chain is Transcriptional repressor PifC (pifC), found in Escherichia coli (strain K12).